A 603-amino-acid chain; its full sequence is Polypeptide N-acetylgalactosaminyltransferase 9 (603 aa).

Topologically, residues 1–6 (MAVARK) are cytoplasmic. The helical; Signal-anchor for type II membrane protein transmembrane segment at 7-29 (IRTLLTVNILVFVGIVLFSVYCR) threads the bilayer. The Lumenal portion of the chain corresponds to 30–603 (LQGRSQELVR…IRNWIKHARH (574 aa)). 2 disulfides stabilise this stretch: cysteine 141/cysteine 372 and cysteine 363/cysteine 442. The tract at residues 150 to 261 (LPQVSVVFIF…TGWAEPALSR (112 aa)) is catalytic subdomain A. Aspartate 191 and arginine 222 together coordinate substrate. 3 residues coordinate Mn(2+): aspartate 245, histidine 247, and histidine 377. Residues 318–380 (PIRTPAMIGC…PCSRVAHIER (63 aa)) are catalytic subdomain B. Substrate is bound by residues arginine 380 and tyrosine 385. The N-linked (GlcNAc...) asparagine glycan is linked to asparagine 460. The 137-residue stretch at 464–600 (TYGEVRNSKA…KWMIRNWIKH (137 aa)) folds into the Ricin B-type lectin domain. 3 disulfide bridges follow: cysteine 477–cysteine 493, cysteine 525–cysteine 540, and cysteine 567–cysteine 587.

This sequence belongs to the glycosyltransferase 2 family. GalNAc-T subfamily. The cofactor is Mn(2+). In terms of tissue distribution, specifically expressed in brain. Not expressed in heart, placenta, lung, liver, skeletal muscle, kidney, pancreas, spleen, thymus, prostate, testis, ovary, small intestine, colon and leukocyte. In brain, it is expressed in cerebellum, frontal lobe, temporal lobe, putamen and spinal cord, weakly expressed in cerebral cortex. Not expressed in medulla and occipital pole.

Its subcellular location is the golgi apparatus membrane. The enzyme catalyses L-seryl-[protein] + UDP-N-acetyl-alpha-D-galactosamine = a 3-O-[N-acetyl-alpha-D-galactosaminyl]-L-seryl-[protein] + UDP + H(+). The catalysed reaction is L-threonyl-[protein] + UDP-N-acetyl-alpha-D-galactosamine = a 3-O-[N-acetyl-alpha-D-galactosaminyl]-L-threonyl-[protein] + UDP + H(+). It functions in the pathway protein modification; protein glycosylation. Its function is as follows. Catalyzes the initial reaction in O-linked oligosaccharide biosynthesis, the transfer of an N-acetyl-D-galactosamine residue to a serine or threonine residue on the protein receptor. Does not glycosylate apomucin or SDC3. In Homo sapiens (Human), this protein is Polypeptide N-acetylgalactosaminyltransferase 9 (GALNT9).